Reading from the N-terminus, the 208-residue chain is Adenylate kinase (208 aa).

Position 10 to 15 (10 to 15 (GAGKGT)) interacts with ATP. The segment at 30 to 59 (STGEMLRAAVAAGTPVGLKAKDVMASGGLV) is NMP. Residues T31, R36, 57 to 59 (GLV), 85 to 88 (GFPR), and Q92 contribute to the AMP site. Residues 126 to 142 (SRVAEMTARGEQVRADD) are LID. R127 is an ATP binding site. Residues R139 and R150 each contribute to the AMP site. ATP is bound at residue M178.

The protein belongs to the adenylate kinase family. In terms of assembly, monomer.

The protein localises to the cytoplasm. The catalysed reaction is AMP + ATP = 2 ADP. Its pathway is purine metabolism; AMP biosynthesis via salvage pathway; AMP from ADP: step 1/1. Catalyzes the reversible transfer of the terminal phosphate group between ATP and AMP. Plays an important role in cellular energy homeostasis and in adenine nucleotide metabolism. The chain is Adenylate kinase from Nitrobacter hamburgensis (strain DSM 10229 / NCIMB 13809 / X14).